The primary structure comprises 119 residues: MGHVEKVARRHKIKTRSKARGQGTVEKPRLCVFRSLSQIYVQLVDDVNGAILLSVSSMSKENKGLKGTKCDISRTIGKQIGEKAVQKGITKVVFDRNGFRYHGRVQALADGAREAGLVF.

Positions Met1–Gln22 are disordered. A compositionally biased stretch (basic residues) spans Ala8–Ala19.

The protein belongs to the universal ribosomal protein uL18 family. As to quaternary structure, part of the 50S ribosomal subunit; part of the 5S rRNA/L5/L18/L25 subcomplex. Contacts the 5S and 23S rRNAs.

This is one of the proteins that bind and probably mediate the attachment of the 5S RNA into the large ribosomal subunit, where it forms part of the central protuberance. This chain is Large ribosomal subunit protein uL18, found in Chlorobium phaeobacteroides (strain BS1).